A 408-amino-acid polypeptide reads, in one-letter code: Glutamate N-acetyltransferase (408 aa).

Thr150, Lys176, Thr189, Glu271, Asn403, and Thr408 together coordinate substrate. The Nucleophile role is filled by Thr189.

It belongs to the ArgJ family. In terms of assembly, heterotetramer of two alpha and two beta chains.

Its subcellular location is the cytoplasm. The catalysed reaction is N(2)-acetyl-L-ornithine + L-glutamate = N-acetyl-L-glutamate + L-ornithine. Its pathway is amino-acid biosynthesis; L-arginine biosynthesis; L-ornithine and N-acetyl-L-glutamate from L-glutamate and N(2)-acetyl-L-ornithine (cyclic): step 1/1. In terms of biological role, catalyzes the transfer of the acetyl group from N(2)-acetylornithine to glutamate, forming N-acetylglutamate and L-ornithine. In Methanococcus maripaludis (strain DSM 14266 / JCM 13030 / NBRC 101832 / S2 / LL), this protein is Glutamate N-acetyltransferase.